Reading from the N-terminus, the 244-residue chain is Lymphotoxin-beta (244 aa).

Residues Met-1–Ser-18 are Cytoplasmic-facing. Residues Leu-19–Pro-48 traverse the membrane as a helical; Signal-anchor for type II membrane protein segment. The Extracellular portion of the chain corresponds to Gln-49 to Gly-244. In terms of domain architecture, THD spans Pro-88–Val-243. N-linked (GlcNAc...) asparagine glycosylation occurs at Asn-222.

Belongs to the tumor necrosis factor family. As to quaternary structure, heterotrimer of either two LTB and one LTA subunits or (less prevalent) two LTA and one LTB subunits.

The protein resides in the membrane. Functionally, cytokine that binds to LTBR/TNFRSF3. May play a specific role in immune response regulation. Provides the membrane anchor for the attachment of the heterotrimeric complex to the cell surface. The chain is Lymphotoxin-beta (LTB) from Pan troglodytes (Chimpanzee).